Reading from the N-terminus, the 170-residue chain is Sec-independent protein translocase protein TatB (170 aa).

A helical transmembrane segment spans residues 1 to 21 (MIDFGFDKIALIGAVALIVIG). The segment at 69 to 170 (AARNVEQSVS…VARFRPPRPL (102 aa)) is disordered. The span at 73–93 (VEQSVSSEVNRTSSEMNQAWE) shows a compositional bias: polar residues. A compositionally biased stretch (basic residues) spans 128 to 137 (HPRKNWRLKR).

The protein belongs to the TatB family. In terms of assembly, the Tat system comprises two distinct complexes: a TatABC complex, containing multiple copies of TatA, TatB and TatC subunits, and a separate TatA complex, containing only TatA subunits. Substrates initially bind to the TatABC complex, which probably triggers association of the separate TatA complex to form the active translocon.

Its subcellular location is the cell inner membrane. Functionally, part of the twin-arginine translocation (Tat) system that transports large folded proteins containing a characteristic twin-arginine motif in their signal peptide across membranes. Together with TatC, TatB is part of a receptor directly interacting with Tat signal peptides. TatB may form an oligomeric binding site that transiently accommodates folded Tat precursor proteins before their translocation. This is Sec-independent protein translocase protein TatB from Methylibium petroleiphilum (strain ATCC BAA-1232 / LMG 22953 / PM1).